Here is a 484-residue protein sequence, read N- to C-terminus: MAAVGDHGSPDSYRSPLASRYASPEMCFVFSDRYKFRTWRQLWLWLAEAEQTLGLPITDEQIQEMKSNLDNIDFKMAAEEEKRLRHDVMAHVHTFGHCCPKAAGIIHLGATSCYVGDNTDLIILRNALDLLLPKLARVISRLADFAKERASLPTLGFTHFQPAQLTTVGKRCCLWIQDLCMDLQNLKRVRDDLRFRGVKGTTGTQASFLQLFEGDDHKVEQLDKMVTDKAGFKRAFIITGQTYTRKVDIEVLSVLASLGASVHKICTDIRLLANLKEMEEPFEKQQIGSSAMPYKRNPMRSERCCSLARHLMTLVMDPLQTASVQWFERTLDDSANRRICLAEAFLTADTILNTLQNISEGLVVYPKVIERRIRQELPFMATENIIMAMVKAGGSRQDCHEKIRVLSQQAASVVKQEGGDNDLIERIQADAYFSPIHSQLDRLLDPSSFTGRASQQVQRFLEEEVYPLLKPYESVMKVKAELCL.

Residue alanine 2 is modified to N-acetylalanine. Substrate is bound by residues 20-21, 85-87, and 111-112; these read RY, RHD, and TS. An N6-acetyllysine modification is found at lysine 147. The active-site Proton donor/acceptor is the histidine 159. Glutamine 241 serves as a coordination point for substrate. The active-site Proton donor/acceptor is the serine 289. Lysine 295 is subject to N6-acetyllysine. Residues arginine 303, arginine 329, serine 334, and arginine 338 each coordinate substrate. Lysine 415 participates in a covalent cross-link: Glycyl lysine isopeptide (Lys-Gly) (interchain with G-Cter in SUMO1).

Belongs to the lyase 1 family. Adenylosuccinate lyase subfamily. In terms of assembly, homotetramer. Residues from neighboring subunits contribute catalytic and substrate-binding residues to each active site.

It carries out the reaction N(6)-(1,2-dicarboxyethyl)-AMP = fumarate + AMP. It catalyses the reaction (2S)-2-[5-amino-1-(5-phospho-beta-D-ribosyl)imidazole-4-carboxamido]succinate = 5-amino-1-(5-phospho-beta-D-ribosyl)imidazole-4-carboxamide + fumarate. The protein operates within purine metabolism; AMP biosynthesis via de novo pathway; AMP from IMP: step 2/2. Its pathway is purine metabolism; IMP biosynthesis via de novo pathway; 5-amino-1-(5-phospho-D-ribosyl)imidazole-4-carboxamide from 5-amino-1-(5-phospho-D-ribosyl)imidazole-4-carboxylate: step 2/2. In terms of biological role, catalyzes two non-sequential steps in de novo AMP synthesis: converts (S)-2-(5-amino-1-(5-phospho-D-ribosyl)imidazole-4-carboxamido)succinate (SAICAR) to fumarate plus 5-amino-1-(5-phospho-D-ribosyl)imidazole-4-carboxamide, and thereby also contributes to de novo IMP synthesis, and converts succinyladenosine monophosphate (SAMP) to AMP and fumarate. In Macaca fascicularis (Crab-eating macaque), this protein is Adenylosuccinate lyase (ADSL).